We begin with the raw amino-acid sequence, 231 residues long: MADITIGVVVFPGSNCDHDTMHAVASFEGVKPVMLWHGSHDLQGAKAIILPGGFSYGDYLRAGSIARFSPIMQEVVDAAGKGLPVLGICNGFQVLLESGLLDGALSRNRDKKFLCRDTYIRPVNSNTMFTGLYREDEVLSIPIAHGEGNYFAPPEVIESLEEHDQVVFRYTDREGHVSDEANPNGSVGNIAGIMNRNGNVLGLMPHPERASEKLLGSEDGRRLFASLFRQL.

Residues glycine 7 to leucine 231 enclose the Glutamine amidotransferase type-1 domain. Cysteine 89 functions as the Nucleophile in the catalytic mechanism. Residues histidine 206 and glutamate 208 contribute to the active site.

As to quaternary structure, part of the FGAM synthase complex composed of 1 PurL, 1 PurQ and 2 PurS subunits.

It localises to the cytoplasm. The enzyme catalyses N(2)-formyl-N(1)-(5-phospho-beta-D-ribosyl)glycinamide + L-glutamine + ATP + H2O = 2-formamido-N(1)-(5-O-phospho-beta-D-ribosyl)acetamidine + L-glutamate + ADP + phosphate + H(+). It catalyses the reaction L-glutamine + H2O = L-glutamate + NH4(+). It participates in purine metabolism; IMP biosynthesis via de novo pathway; 5-amino-1-(5-phospho-D-ribosyl)imidazole from N(2)-formyl-N(1)-(5-phospho-D-ribosyl)glycinamide: step 1/2. Functionally, part of the phosphoribosylformylglycinamidine synthase complex involved in the purines biosynthetic pathway. Catalyzes the ATP-dependent conversion of formylglycinamide ribonucleotide (FGAR) and glutamine to yield formylglycinamidine ribonucleotide (FGAM) and glutamate. The FGAM synthase complex is composed of three subunits. PurQ produces an ammonia molecule by converting glutamine to glutamate. PurL transfers the ammonia molecule to FGAR to form FGAM in an ATP-dependent manner. PurS interacts with PurQ and PurL and is thought to assist in the transfer of the ammonia molecule from PurQ to PurL. The chain is Phosphoribosylformylglycinamidine synthase subunit PurQ from Chlorobium luteolum (strain DSM 273 / BCRC 81028 / 2530) (Pelodictyon luteolum).